We begin with the raw amino-acid sequence, 730 residues long: Protein groucho (730 aa).

The tract at residues Gln-144–Asn-411 is disordered. Residues Ala-198–Lys-233 show a composition bias toward basic and acidic residues. Phosphoserine is present on residues Ser-205, Ser-207, and Ser-218. Residues Val-206–Ser-267 form a CCN domain region. The Nuclear localization signal signature appears at Lys-227–Lys-230. The residue at position 242 (Ser-242) is a Phosphoserine; by CK2. The segment covering Met-254–Lys-283 has biased composition (basic and acidic residues). Ser-258 is modified (phosphoserine; by CDC2). The segment at Asn-262–Ala-425 is binding to basic helix-loop-helix domain. Position 267 is a phosphoserine (Ser-267). Composition is skewed to low complexity over residues Ser-296 to Ser-308, Ala-322 to Pro-345, and Tyr-353 to Ala-362. 2 positions are modified to phosphothreonine: Thr-326 and Thr-328. Residues Gln-366–Tyr-382 are compositionally biased toward pro residues. WD repeat units follow at residues Ser-442 to Pro-480, Gln-488 to Lys-527, Ser-532 to Gln-571, Gly-574 to Gln-613, Asp-615 to Leu-654, Leu-656 to Gln-695, and Lys-697 to Tyr-730.

The protein belongs to the WD repeat Groucho/TLE family. In terms of assembly, forms a complex with the hairy/Enhancer of split/deadpan family of basic helix-loop-helix proteins in order to repress transcription. Its activity in regulating transcription depends on other proteins as it lacks a DNA-binding motif. Interacts with hairy/hry (via WRPW motif). Post-translationally, ubiquitinated by XIAP/BIRC4. Ubiquitinated by hyd in response to Wnt signaling, leading to degradation by the proteasome.

It is found in the nucleus. Functionally, transcriptional corepressor that regulates transcription when recruited to specific target DNA by hairy-related bHLH proteins. Maternally required for neurogenesis; in the segregation of the neuroectoderm. Directly or indirectly interacts with Notch and Delta. This is Protein groucho (gro) from Drosophila melanogaster (Fruit fly).